The chain runs to 154 residues: Large ribosomal subunit protein uL22 (154 aa).

It belongs to the universal ribosomal protein uL22 family. As to quaternary structure, part of the 50S ribosomal subunit.

Functionally, this protein binds specifically to 23S rRNA. It makes multiple contacts with different domains of the 23S rRNA in the assembled 50S subunit and ribosome. Its function is as follows. The globular domain of the protein is located near the polypeptide exit tunnel on the outside of the subunit, while an extended beta-hairpin is found that lines the wall of the exit tunnel in the center of the 70S ribosome. This chain is Large ribosomal subunit protein uL22, found in Methanoregula boonei (strain DSM 21154 / JCM 14090 / 6A8).